Consider the following 602-residue polypeptide: Leishmanolysin (602 aa).

Positions 1 to 39 (MSVDSSSTHRRRCVAARLVRLAAAGAAVTVAVGTAAAWA) are cleaved as a signal peptide. Positions 40–100 (HAGALQHRCV…DPRPGSARSV (61 aa)) are cleaved as a propeptide — activation peptide. 2 cysteine pairs are disulfide-bonded: cysteine 125–cysteine 142 and cysteine 191–cysteine 230. Histidine 264 contacts Zn(2+). Glutamate 265 is an active-site residue. Histidine 268 contacts Zn(2+). N-linked (GlcNAc...) asparagine glycosylation occurs at asparagine 300. 7 disulfide bridges follow: cysteine 314–cysteine 386, cysteine 393–cysteine 455, cysteine 406–cysteine 425, cysteine 415–cysteine 489, cysteine 466–cysteine 510, cysteine 515–cysteine 565, and cysteine 535–cysteine 558. Residue histidine 334 coordinates Zn(2+). The N-linked (GlcNAc...) asparagine glycan is linked to asparagine 407. A glycan (N-linked (GlcNAc...) asparagine) is linked at asparagine 534. Asparagine 577 carries the GPI-anchor amidated asparagine lipid modification. Residues 578 to 602 (TAAGRRGPRAAATALLVAALLAVAL) constitute a propeptide, removed in mature form.

This sequence belongs to the peptidase M8 family. Zn(2+) is required as a cofactor. In terms of processing, the phosphatidylinositol moiety of the GPI-anchor contains a fully saturated, unbranched 1-O-alkyl chain (mainly C24:0) and a mixture of fully saturated unbranched 2-O-acyl chains (C12:0, C14:0, C16:0, and C18:0).

It localises to the cell membrane. It catalyses the reaction Preference for hydrophobic residues at P1 and P1' and basic residues at P2' and P3'. A model nonapeptide is cleaved at -Ala-Tyr-|-Leu-Lys-Lys-.. Its function is as follows. Has an integral role during the infection of macrophages in the mammalian host. This is Leishmanolysin (gp63) from Leishmania major.